The chain runs to 1944 residues: Chromatin-remodeling ATPase INO80 (1944 aa).

The disordered stretch occupies residues 1–518; that stretch reads MEPSKFHSTV…QANGLTKQKA (518 aa). Residues 73–83 show a composition bias toward low complexity; that stretch reads QHHYSASSAAS. Residues 84–98 are compositionally biased toward polar residues; the sequence is GPQSTYNGANNGVPQ. The span at 101–111 shows a compositional bias: basic residues; the sequence is SHSRSNSHSRH. Composition is skewed to polar residues over residues 139-149, 208-223, and 289-307; these read SPQTSGLQAPQ, AGSS…VSTP, and NILN…QAES. The span at 312–323 shows a compositional bias: low complexity; the sequence is AAVPAATPSRAA. A compositionally biased stretch (polar residues) spans 327 to 336; the sequence is SFSNILSSSE. Composition is skewed to basic and acidic residues over residues 356 to 382 and 429 to 464; these read PEPE…EPSK and ESEK…ERVT. Coiled-coil stretches lie at residues 506–563 and 624–696; these read AKRQ…KALE and EQEL…KGIK. The interval 715-815 is disordered; it reads ATFSADSMEP…EEPPPKKKGK (101 aa). Basic residues predominate over residues 727–739; it reads GKGKGRAGNRPKK. Basic and acidic residues-rich tracts occupy residues 740–751, 782–791, and 800–815; these read SKEQKQAEKEAA, LSKDKDRDVD, and TEIK…KKGK. A DBINO domain is found at 840–965; it reads IWRDMARKDV…SHFIGKKIKT (126 aa). Residues 908–953 adopt a coiled-coil conformation; that stretch reads KRNEREERDLRKAAERQELENARKEEADREAARQKRKLNFLISQTE. A compositionally biased stretch (basic and acidic residues) spans 966–986; the sequence is DEVERSTDRPEVAAEEQKNKP. Residues 966–1003 are disordered; that stretch reads DEVERSTDRPEVAAEEQKNKPAGENALTVKEPTGPVGA. Positions 1090-1262 constitute a Helicase ATP-binding domain; that stretch reads VNLYEQGING…WALLHFIMPS (173 aa). 1103 to 1110 is a binding site for ATP; it reads DEMGLGKT. The short motif at 1213–1216 is the DEAQ box element; sequence DEAQ. Residues 1663–1818 form the Helicase C-terminal domain; the sequence is KLDELLFKLK…GGAGASSGVD (156 aa). Residues 1862 to 1873 are compositionally biased toward basic residues; that stretch reads AKKRGGGKRKKV. Positions 1862 to 1944 are disordered; the sequence is AKKRGGGKRK…LAIADGQMDM (83 aa). Residues 1887–1900 show a composition bias toward basic and acidic residues; it reads EMYHEGEGNFDDNK. Positions 1918–1932 are enriched in basic residues; it reads GKKKKATGKKAKTTK.

The protein belongs to the SNF2/RAD54 helicase family. Component of the INO80 chromatin-remodeling complex.

The protein resides in the nucleus. It carries out the reaction ATP + H2O = ADP + phosphate + H(+). Its function is as follows. ATPase component of the INO80 complex which remodels chromatin by shifting nucleosomes and is involved in DNA repair. The chain is Chromatin-remodeling ATPase INO80 (INO80) from Pyricularia oryzae (strain 70-15 / ATCC MYA-4617 / FGSC 8958) (Rice blast fungus).